Reading from the N-terminus, the 362-residue chain is 3-dehydroquinate synthase (362 aa).

NAD(+)-binding positions include 71–76 (DGEQYK), 105–109 (GVVGD), 129–130 (TT), Lys-142, Lys-151, and 169–172 (CLKT). 3 residues coordinate Zn(2+): Glu-184, His-247, and His-264.

It belongs to the sugar phosphate cyclases superfamily. Dehydroquinate synthase family. It depends on Co(2+) as a cofactor. Zn(2+) is required as a cofactor. Requires NAD(+) as cofactor.

The protein resides in the cytoplasm. The enzyme catalyses 7-phospho-2-dehydro-3-deoxy-D-arabino-heptonate = 3-dehydroquinate + phosphate. Its pathway is metabolic intermediate biosynthesis; chorismate biosynthesis; chorismate from D-erythrose 4-phosphate and phosphoenolpyruvate: step 2/7. Its function is as follows. Catalyzes the conversion of 3-deoxy-D-arabino-heptulosonate 7-phosphate (DAHP) to dehydroquinate (DHQ). The chain is 3-dehydroquinate synthase from Shigella dysenteriae serotype 1 (strain Sd197).